The primary structure comprises 75 residues: CDC42 small effector protein 1 (75 aa).

2 S-palmitoyl cysteine lipidation sites follow: cysteine 10 and cysteine 11. One can recognise a CRIB domain in the interval 30–43 (IGEPTNFVHLTHIG). A disordered region spans residues 45-75 (GEMADGMQPSGPIKEQMRSKVPHANGRNSLL).

Belongs to the CDC42SE/SPEC family.

It is found in the cytoplasm. The protein localises to the cytoskeleton. Its subcellular location is the cell membrane. Probably involved in the organization of the actin cytoskeleton by acting downstream of CDC42, inducing actin filament assembly. The protein is CDC42 small effector protein 1 (cdc42se1) of Danio rerio (Zebrafish).